Consider the following 312-residue polypeptide: 2-aminophenol 1,6-dioxygenase subunit beta (312 aa).

Residues histidine 13, histidine 62, and glutamate 251 each coordinate Fe cation.

It belongs to the LigB/MhpB extradiol dioxygenase family. In terms of assembly, the APD complex is a heterotetramer of 2 alpha (CnbCa) and 2 beta (CnbCb) subunits. The cofactor is Fe(2+).

It catalyses the reaction 2-aminophenol + O2 = 2-aminomuconate 6-semialdehyde. The catalysed reaction is 2-amino-5-chlorophenol + O2 = 2-amino-5-chloromuconate 6-semialdehyde. The protein operates within xenobiotic degradation; nitrobenzene degradation. It functions in the pathway xenobiotic degradation; 4-chloronitrobenzene degradation. Its activity is regulated as follows. Complete loss of activity in the presence of Ni(2+), Co(2+), Cd(2+), Zn(2+) and hydrogen peroxide, however activity with hydrogen peroxide partially restored upon addition of excess ascorbate. Partially inhibited by Fe(2+), Mg(2+), Ca(2+), Mn(2+), Cu(2+) and also by EDTA, at 2 mM concentration. Total activity inhibited in the presence of catechol or 4-nitrocatechol but completely restored after removal of catechol and addition of 2 mM Fe(2+) and 5 mM ascorbate. Component of the 2-aminophenol 1,6-dioxygenase (APD) complex that catalyzes the ring fission of 2-aminophenol to produce 2-aminomuconic semialdehyde. CnbCb seems to be the catalytic subunit of the complex. Also active on other substrates such as 2-amino-5-chlorophenol (68% activity), protocatechuate (33% activity) and catechol (5% activity). Both 2-aminophenol and 2-amino-5-cholorophenol are likely native substrates for this dioxygenase which is involved in the reductive degradation pathway of both nitrobenzene (NB) and 4-chloronitrobenzene (4-CNB), allowing C.testosteroni strain CNB-1 to grow on these compounds as sole source of carbon, nitrogen, and energy. This is 2-aminophenol 1,6-dioxygenase subunit beta from Comamonas testosteroni (Pseudomonas testosteroni).